Consider the following 300-residue polypeptide: Protease HtpX (300 aa).

The next 2 membrane-spanning stretches (helical) occupy residues Ile-4–Leu-24 and Ser-40–Ser-60. Position 145 (His-145) interacts with Zn(2+). The active site involves Glu-146. Residue His-149 participates in Zn(2+) binding. Helical transmembrane passes span Gly-153 to Ala-173 and Leu-193 to Ala-213. Glu-225 contacts Zn(2+).

Belongs to the peptidase M48B family. Zn(2+) is required as a cofactor.

Its subcellular location is the cell inner membrane. The sequence is that of Protease HtpX from Chromohalobacter salexigens (strain ATCC BAA-138 / DSM 3043 / CIP 106854 / NCIMB 13768 / 1H11).